A 244-amino-acid polypeptide reads, in one-letter code: Thiol S-methyltransferase TMT1B (244 aa).

A signal peptide spans 1–23; sequence MDVLVPLLQLLVLLLTLPLHLLA.

It belongs to the methyltransferase superfamily. In terms of tissue distribution, highly expressed in liver and kidney. No expression in testis, heart, lung, brain, spleen or cultured fibroblasts.

It is found in the endoplasmic reticulum membrane. The protein resides in the lipid droplet. The protein localises to the microsome. Its subcellular location is the cytoplasm. It localises to the cytosol. The enzyme catalyses a thiol + S-adenosyl-L-methionine = a methyl thioether + S-adenosyl-L-homocysteine + H(+). In terms of biological role, thiol S-methyltransferase that catalyzes the transfer of a methyl group from S-adenosyl-L-methionine to alkyl and phenolic thiol-containing acceptor substrates. Together with TMT1B accounts for most of S-thiol methylation activity in the endoplasmic reticulum of hepatocytes. Selectively methylates S-centered nucleophiles from metabolites such as hydrogen sulfide and dithiothreitol. This chain is Thiol S-methyltransferase TMT1B (Tmt1b), found in Rattus norvegicus (Rat).